The following is a 221-amino-acid chain: Adenylate kinase (221 aa).

10 to 15 (GAGKGT) is a binding site for ATP. An NMP region spans residues 30–59 (STGDMLRAAVKAGTPLGVEAKKVMDAGGLV). AMP-binding positions include T31, R36, 57–59 (GLV), 85–88 (GFPR), and Q92. The segment at 122–159 (GRRVHVASGRTYHVKYNPPKTEGVDDETGEALIQRDDD) is LID. Residues R123 and 132 to 133 (TY) contribute to the ATP site. Positions 156 and 167 each coordinate AMP. G207 contacts ATP.

Belongs to the adenylate kinase family. Monomer.

It is found in the cytoplasm. It catalyses the reaction AMP + ATP = 2 ADP. The protein operates within purine metabolism; AMP biosynthesis via salvage pathway; AMP from ADP: step 1/1. Its function is as follows. Catalyzes the reversible transfer of the terminal phosphate group between ATP and AMP. Plays an important role in cellular energy homeostasis and in adenine nucleotide metabolism. The protein is Adenylate kinase of Cupriavidus necator (strain ATCC 17699 / DSM 428 / KCTC 22496 / NCIMB 10442 / H16 / Stanier 337) (Ralstonia eutropha).